The sequence spans 364 residues: UDP-N-acetylglucosamine--N-acetylmuramyl-(pentapeptide) pyrophosphoryl-undecaprenol N-acetylglucosamine transferase (364 aa).

UDP-N-acetyl-alpha-D-glucosamine is bound by residues 10–12 (TGG), Asn128, Arg170, Ser199, Ile250, and Gln295.

Belongs to the glycosyltransferase 28 family. MurG subfamily.

Its subcellular location is the cell inner membrane. The catalysed reaction is di-trans,octa-cis-undecaprenyl diphospho-N-acetyl-alpha-D-muramoyl-L-alanyl-D-glutamyl-meso-2,6-diaminopimeloyl-D-alanyl-D-alanine + UDP-N-acetyl-alpha-D-glucosamine = di-trans,octa-cis-undecaprenyl diphospho-[N-acetyl-alpha-D-glucosaminyl-(1-&gt;4)]-N-acetyl-alpha-D-muramoyl-L-alanyl-D-glutamyl-meso-2,6-diaminopimeloyl-D-alanyl-D-alanine + UDP + H(+). The protein operates within cell wall biogenesis; peptidoglycan biosynthesis. In terms of biological role, cell wall formation. Catalyzes the transfer of a GlcNAc subunit on undecaprenyl-pyrophosphoryl-MurNAc-pentapeptide (lipid intermediate I) to form undecaprenyl-pyrophosphoryl-MurNAc-(pentapeptide)GlcNAc (lipid intermediate II). The sequence is that of UDP-N-acetylglucosamine--N-acetylmuramyl-(pentapeptide) pyrophosphoryl-undecaprenol N-acetylglucosamine transferase from Chlorobium phaeobacteroides (strain DSM 266 / SMG 266 / 2430).